The sequence spans 98 residues: Large ribosomal subunit protein uL23 (98 aa).

This sequence belongs to the universal ribosomal protein uL23 family. Part of the 50S ribosomal subunit. Contacts protein L29, and trigger factor when it is bound to the ribosome.

In terms of biological role, one of the early assembly proteins it binds 23S rRNA. One of the proteins that surrounds the polypeptide exit tunnel on the outside of the ribosome. Forms the main docking site for trigger factor binding to the ribosome. This chain is Large ribosomal subunit protein uL23, found in Methylobacterium nodulans (strain LMG 21967 / CNCM I-2342 / ORS 2060).